The sequence spans 217 residues: Translation initiation factor IF-3 (217 aa).

Positions 170-217 (KKTEAMAEARQAQEARKADAKANPGKSQNAAETDDAEAEAPAEAPAEA) are disordered. Positions 172-189 (TEAMAEARQAQEARKADA) are enriched in basic and acidic residues.

The protein belongs to the IF-3 family. Monomer.

It localises to the cytoplasm. Functionally, IF-3 binds to the 30S ribosomal subunit and shifts the equilibrium between 70S ribosomes and their 50S and 30S subunits in favor of the free subunits, thus enhancing the availability of 30S subunits on which protein synthesis initiation begins. The protein is Translation initiation factor IF-3 of Streptomyces coelicolor (strain ATCC BAA-471 / A3(2) / M145).